Consider the following 98-residue polypeptide: MLNFVRIFLPFLKYQVFTDKTNDLLKYNIYVFDVDKKLNKLQIKNIIEYIFNIKIYSINTYIKNNKYCCFNKIKGLKTNYKRAFIRLKSVNIIPYFSC.

Belongs to the universal ribosomal protein uL23 family. As to quaternary structure, part of the 50S ribosomal subunit.

Its subcellular location is the plastid. Its function is as follows. Binds to 23S rRNA. This Euglena longa (Euglenophycean alga) protein is Large ribosomal subunit protein uL23c (rpl23).